The primary structure comprises 556 residues: Glucose-6-phosphate isomerase (556 aa).

The active-site Proton donor is Glu-360. Active-site residues include His-391 and Lys-519.

This sequence belongs to the GPI family.

Its subcellular location is the cytoplasm. It catalyses the reaction alpha-D-glucose 6-phosphate = beta-D-fructose 6-phosphate. It participates in carbohydrate biosynthesis; gluconeogenesis. Its pathway is carbohydrate degradation; glycolysis; D-glyceraldehyde 3-phosphate and glycerone phosphate from D-glucose: step 2/4. Its function is as follows. Catalyzes the reversible isomerization of glucose-6-phosphate to fructose-6-phosphate. This is Glucose-6-phosphate isomerase from Acinetobacter baumannii (strain SDF).